Reading from the N-terminus, the 331-residue chain is Pantothenate kinase (331 aa).

109–116 (GSVAVGKS) is an ATP binding site.

It belongs to the prokaryotic pantothenate kinase family.

The protein localises to the cytoplasm. It carries out the reaction (R)-pantothenate + ATP = (R)-4'-phosphopantothenate + ADP + H(+). The protein operates within cofactor biosynthesis; coenzyme A biosynthesis; CoA from (R)-pantothenate: step 1/5. In Rhizobium rhizogenes (strain K84 / ATCC BAA-868) (Agrobacterium radiobacter), this protein is Pantothenate kinase.